Here is a 360-residue protein sequence, read N- to C-terminus: Alpha-N-acetyl-neuraminyl-2,3-beta-galactosyl-1,3-N-acetyl-galactosaminide alpha-2,6-sialyltransferase (360 aa).

Residues 1-71 (MEHVVTCWRL…PGRLLLLTLC (71 aa)) lie on the Cytoplasmic side of the membrane. Residues 72–94 (ILTFSAVCVFLCCWACLPLCLAT) traverse the membrane as a helical; Signal-anchor for type II membrane protein segment. Residues 95-360 (CLDRHLPAAP…VFAHPSWRAK (266 aa)) lie on the Lumenal side of the membrane. Residues Cys134 and Cys283 are joined by a disulfide bond. Asn193 carries N-linked (GlcNAc...) asparagine glycosylation.

Belongs to the glycosyltransferase 29 family. In terms of tissue distribution, high expression in brain and colon and to a lesser extent in lung, heart, kidney, spleen and thymus.

It localises to the golgi apparatus membrane. The catalysed reaction is an alpha-Neu5Ac-(2-&gt;3)-beta-D-Gal-(1-&gt;3)-D-GlcNAc derivative + CMP-N-acetyl-beta-neuraminate = an alpha-Neu5Ac-(2-&gt;3)-beta-D-Gal-(1-&gt;3)-[alpha-Neu5Ac-(2-&gt;6)]-D-GlcNAc derivative + CMP + H(+). It catalyses the reaction N-acetyl-alpha-neuraminosyl-(2-&gt;3)-beta-D-galactosyl-(1-&gt;3)-N-acetyl-D-galactosamine + CMP-N-acetyl-beta-neuraminate = N-acetyl-alpha-neuraminosyl-(2-&gt;3)-beta-D-galactosyl-(1-&gt;3)-[N-acetyl-alpha-neuraminosyl-(2-&gt;6)]-N-acetyl-D-galactosamine + CMP + H(+). The enzyme catalyses a ganglioside GM1b (d18:1(4E)) + CMP-N-acetyl-beta-neuraminate = a ganglioside GD1alpha (d18:1(4E)) + CMP + H(+). It carries out the reaction 3-O-[alpha-Neu5Ac-(2-&gt;3)-beta-D-Gal-(1-&gt;3)-alpha-D-GalNAc]-L-Ser-[protein] + CMP-N-acetyl-beta-neuraminate = a 3-O-{alpha-Neu5Ac-(2-&gt;3)-beta-D-Gal-(1-&gt;3)-[alpha-Neu5Ac-(2-&gt;6)]-alpha-D-GalNAc}-L-seryl-[protein] + CMP + H(+). The catalysed reaction is 3-O-[alpha-Neu5Ac-(2-&gt;3)-beta-D-Gal-(1-&gt;3)-alpha-D-GalNAc]-L-Thr-[protein] + CMP-N-acetyl-beta-neuraminate = a 3-O-{alpha-Neu5Ac-(2-&gt;3)-beta-D-Gal-(1-&gt;3)-[alpha-Neu5Ac-(2-&gt;6)]-alpha-D-GalNAc}-L-threonyl-[protein] + CMP + H(+). It functions in the pathway protein modification; protein glycosylation. It participates in glycolipid biosynthesis. Its function is as follows. Transfers the sialyl group (N-acetyl-alpha-neuraminyl or NeuAc) from CMP-NeuAc to the GalNAc residue on the NeuAc-alpha-2,3-Gal-beta-1,3-GalNAc sequence of glycoproteins and glycolipids forming an alpha-2,6-linkage. Produces branched type disialyl structures by transfer of a sialyl group onto a GalNAc residue inside the backbone core chains. Prefers O-glycans to glycoproteins or glycolipids. The protein is Alpha-N-acetyl-neuraminyl-2,3-beta-galactosyl-1,3-N-acetyl-galactosaminide alpha-2,6-sialyltransferase (St6galnac4) of Mus musculus (Mouse).